Consider the following 663-residue polypeptide: UvrABC system protein B (663 aa).

Basic and acidic residues predominate over residues 1-10 (MIDKRDDKPF). The interval 1–23 (MIDKRDDKPFKLKSKYKPSGDQP) is disordered. In terms of domain architecture, Helicase ATP-binding spans 31-418 (DNIEGGEKAQ…TNTIIEQIIR (388 aa)). 44 to 51 (GATGTGKT) lines the ATP pocket. The Beta-hairpin signature appears at 97–120 (YYDYYQPEAYVPSSDTYIEKDSSV). In terms of domain architecture, Helicase C-terminal spans 435 to 601 (QMDDLLGEIN…TIKKDIRGLI (167 aa)). The UVR domain maps to 627-662 (KEAINALQKQMQEAAELLDFELAAQMRDLILELKLM).

The protein belongs to the UvrB family. As to quaternary structure, forms a heterotetramer with UvrA during the search for lesions. Interacts with UvrC in an incision complex.

The protein localises to the cytoplasm. The UvrABC repair system catalyzes the recognition and processing of DNA lesions. A damage recognition complex composed of 2 UvrA and 2 UvrB subunits scans DNA for abnormalities. Upon binding of the UvrA(2)B(2) complex to a putative damaged site, the DNA wraps around one UvrB monomer. DNA wrap is dependent on ATP binding by UvrB and probably causes local melting of the DNA helix, facilitating insertion of UvrB beta-hairpin between the DNA strands. Then UvrB probes one DNA strand for the presence of a lesion. If a lesion is found the UvrA subunits dissociate and the UvrB-DNA preincision complex is formed. This complex is subsequently bound by UvrC and the second UvrB is released. If no lesion is found, the DNA wraps around the other UvrB subunit that will check the other stand for damage. The sequence is that of UvrABC system protein B from Streptococcus pyogenes serotype M28 (strain MGAS6180).